A 343-amino-acid chain; its full sequence is Phenylalanine--tRNA ligase alpha subunit (343 aa).

Glu-258 lines the Mg(2+) pocket.

Belongs to the class-II aminoacyl-tRNA synthetase family. Phe-tRNA synthetase alpha subunit type 1 subfamily. Tetramer of two alpha and two beta subunits. Mg(2+) is required as a cofactor.

The protein localises to the cytoplasm. The catalysed reaction is tRNA(Phe) + L-phenylalanine + ATP = L-phenylalanyl-tRNA(Phe) + AMP + diphosphate + H(+). The sequence is that of Phenylalanine--tRNA ligase alpha subunit from Symbiobacterium thermophilum (strain DSM 24528 / JCM 14929 / IAM 14863 / T).